The following is a 558-amino-acid chain: Arginine--tRNA ligase (558 aa).

The short motif at 119–129 (ANPDGPLHVGH) is the 'HIGH' region element.

This sequence belongs to the class-I aminoacyl-tRNA synthetase family.

Its subcellular location is the cytoplasm. It catalyses the reaction tRNA(Arg) + L-arginine + ATP = L-arginyl-tRNA(Arg) + AMP + diphosphate. In Methanothrix thermoacetophila (strain DSM 6194 / JCM 14653 / NBRC 101360 / PT) (Methanosaeta thermophila), this protein is Arginine--tRNA ligase.